The sequence spans 188 residues: GTP cyclohydrolase 1 (188 aa).

Positions 76, 79, and 148 each coordinate Zn(2+).

Belongs to the GTP cyclohydrolase I family. As to quaternary structure, homomer.

It catalyses the reaction GTP + H2O = 7,8-dihydroneopterin 3'-triphosphate + formate + H(+). It participates in cofactor biosynthesis; 7,8-dihydroneopterin triphosphate biosynthesis; 7,8-dihydroneopterin triphosphate from GTP: step 1/1. This chain is GTP cyclohydrolase 1, found in Thermoanaerobacter pseudethanolicus (strain ATCC 33223 / 39E) (Clostridium thermohydrosulfuricum).